The chain runs to 503 residues: Probable cytosol aminopeptidase (503 aa).

Mn(2+) is bound by residues Lys-270 and Asp-275. Lys-282 is a catalytic residue. Residues Asp-293, Asp-352, and Glu-354 each coordinate Mn(2+). Arg-356 is an active-site residue.

The protein belongs to the peptidase M17 family. Mn(2+) serves as cofactor.

The protein localises to the cytoplasm. The catalysed reaction is Release of an N-terminal amino acid, Xaa-|-Yaa-, in which Xaa is preferably Leu, but may be other amino acids including Pro although not Arg or Lys, and Yaa may be Pro. Amino acid amides and methyl esters are also readily hydrolyzed, but rates on arylamides are exceedingly low.. The enzyme catalyses Release of an N-terminal amino acid, preferentially leucine, but not glutamic or aspartic acids.. Functionally, presumably involved in the processing and regular turnover of intracellular proteins. Catalyzes the removal of unsubstituted N-terminal amino acids from various peptides. In Klebsiella pneumoniae subsp. pneumoniae (strain ATCC 700721 / MGH 78578), this protein is Probable cytosol aminopeptidase.